Here is a 417-residue protein sequence, read N- to C-terminus: MDFCWKREMEGKLAHDHRGMTSPRRICVVTGPVIVGAGPSGLATAACLKERGITSVLLERSNCIASLWQLKTYDRLHLHLPKQFCELPIIPFPGDFPTYPTKQQFIEYLEDYARRFDIKPEFNQTVESAAFDENLGMWRVTSVGEEGTTEYVCRWLVAATGENAEPVVPRFEGMDKFAAAGVVKHTCHYKTGGDFAGKRVLVVGCGNSGMEVCLDLCNFGAQPSLVVRDAVHVLPREMLGTSTFGLSMFLLKWLPIRLVDRFLLVVSRFILGDTTLLGLNRPRLGPLELKNISGKTPVLDVGTLAKIKTGDIKVCSGIRRLKRHEVEFDNGKTERFDAIILATGYKSNVPSWLKENKMFSKKDGFPIQEFPEGWRGECGLYAVGFTKRGISGASMDAKRIAEDIHKCWKQDEQVKKI.

36 to 41 contacts FAD; the sequence is GAGPSG. 204–209 contacts NADP(+); it reads GCGNSG.

Belongs to the FMO family. It depends on FAD as a cofactor. In terms of tissue distribution, highly expressed in roots but modestly expressed in the cauline leaves and flowers. Expressed in anthers.

The protein localises to the cytoplasm. The catalysed reaction is indole-3-pyruvate + NADPH + O2 + H(+) = (indol-3-yl)acetate + CO2 + NADP(+) + H2O. It functions in the pathway plant hormone metabolism; auxin biosynthesis. Involved in auxin biosynthesis via the indole-3-pyruvic acid (IPA) pathway. Also able to convert in vitro phenyl pyruvate (PPA) to phenyl acetic acid (PAA). Required for the formation of floral organs and vascular tissues. Belongs to the set of redundant YUCCA genes probably responsible for auxin biosynthesis in shoots. This chain is Indole-3-pyruvate monooxygenase YUCCA6 (YUC6), found in Arabidopsis thaliana (Mouse-ear cress).